We begin with the raw amino-acid sequence, 130 residues long: MEHWIVIYGGSESTKTLVCCNIYLNRIFSTSQYGNSADNVLYHTHYSSARPYYCYWNYSLFKFHYSCFKRGYSFGNIYKHWSAHGNLKGPCTYNSSLLKPRVLKHSAPPQVFWWGRRDLNPGLRRPRPGG.

This is an uncharacterized protein from Pyrococcus horikoshii (strain ATCC 700860 / DSM 12428 / JCM 9974 / NBRC 100139 / OT-3).